Reading from the N-terminus, the 126-residue chain is Holo-[acyl-carrier-protein] synthase (126 aa).

Residues Asp9 and Glu58 each contribute to the Mg(2+) site.

This sequence belongs to the P-Pant transferase superfamily. AcpS family. Mg(2+) is required as a cofactor.

The protein localises to the cytoplasm. The catalysed reaction is apo-[ACP] + CoA = holo-[ACP] + adenosine 3',5'-bisphosphate + H(+). Its function is as follows. Transfers the 4'-phosphopantetheine moiety from coenzyme A to a Ser of acyl-carrier-protein. The protein is Holo-[acyl-carrier-protein] synthase of Yersinia pestis bv. Antiqua (strain Angola).